Here is a 618-residue protein sequence, read N- to C-terminus: MALLQISEPGQSPDPHQRRIAVGIDLGTTHSLVAAVRSGVAECLPDDEGRVILPSAVRYLEGGRRAIGFDALAAQAEDPENTIVSAKRFMGRTLTDIDDREKLPYRFVDQPGMVSVATRDGVKTPVEVSAELLATLRFRAEDSFDDELFGAVITVPAYFDDAQRQATKDAAQLAGLNVLRLINEPTAAAIAYGLENGSEGLYAVYDLGGGTFDISLLRLSEGVFEVVATGGDSALGGDDYDHALADWALAGAGLAAETAQDKRAVLVAARAVKEALSSAAEARMQVVLRAGLLDLAVTRVQFEALTKPLTDRTLAAVRKVLRDAKVSKDEVKGVVLVGGSTRMPQIREAVTLYLGRSPLTDLNPDEVVALGAAIQAHQLAGNASGNDLLLLDVTPLSLGLETMGGLVERIIPRNSSIPTARAQDFTTFKDGQTAMAIHVLQGEREQVEYCRSLARFELRGIPPMVAGAARIRVSFQVDADGLLSVTAREQTSGVEAAVTVKPSYGLADEQIARMLQEGFTTAEGDMRDRALREARVETERMVLATRAALAADGDLLADGERAGIEALMRAAEQQALGEDAAAIDAAVKALADGTESFAAERMNRGIRQALAGRRVEEV.

This sequence belongs to the heat shock protein 70 family.

Chaperone involved in the maturation of iron-sulfur cluster-containing proteins. Has a low intrinsic ATPase activity which is markedly stimulated by HscB. This chain is Chaperone protein HscA homolog, found in Methylibium petroleiphilum (strain ATCC BAA-1232 / LMG 22953 / PM1).